A 150-amino-acid chain; its full sequence is Endoribonuclease YbeY (150 aa).

The Zn(2+) site is built by histidine 116, histidine 120, and histidine 126.

The protein belongs to the endoribonuclease YbeY family. Zn(2+) serves as cofactor.

It is found in the cytoplasm. In terms of biological role, single strand-specific metallo-endoribonuclease involved in late-stage 70S ribosome quality control and in maturation of the 3' terminus of the 16S rRNA. This is Endoribonuclease YbeY from Beutenbergia cavernae (strain ATCC BAA-8 / DSM 12333 / CCUG 43141 / JCM 11478 / NBRC 16432 / NCIMB 13614 / HKI 0122).